Consider the following 104-residue polypeptide: Large ribosomal subunit protein bL21 (104 aa).

It belongs to the bacterial ribosomal protein bL21 family. As to quaternary structure, part of the 50S ribosomal subunit. Contacts protein L20.

Functionally, this protein binds to 23S rRNA in the presence of protein L20. In Alkalilimnicola ehrlichii (strain ATCC BAA-1101 / DSM 17681 / MLHE-1), this protein is Large ribosomal subunit protein bL21.